A 507-amino-acid polypeptide reads, in one-letter code: Monoogygenase CPUR_05431 (507 aa).

The protein belongs to the PheA/TfdB FAD monooxygenase family. It depends on FAD as a cofactor.

The protein operates within pigment biosynthesis. Monoogygenase; part of the ergochrome gene cluster responsible for the typical purple-black color of the ergot sclerotia. The ergochrome gene cluster produces several ergot pigments including the yellow ergochrome secalonic acid and its derivatives, as well as the red anthraquinones endocrocin and clavorubin. The pathway begins with the synthesis of atrochrysone thioester by the polyketide synthase (PKS) CPUR_05437. The atrochrysone carboxyl ACP thioesterase CPUR_05436 then breaks the thioester bond and releases the atrochrysone carboxylic acid from CPUR_05437. The atrochrysone carboxylic acid is then converted to atrochrysone which is further transformed into emodin anthrone. The next step is performed by the anthrone oxygenase CPUR_05434 that catalyzes the oxidation of emodinanthrone to emodin. Emodin is further modified to yield monodictyphenone via several steps involving CPUR_05427, CPUR_05428, CPUR_05429 and CPUR_05430. The short chain dehydrogenase/reductase CPUR_05418 then catalyzes the C-5 ketoreduction to give the xanthone skeleton of the monomeric units. Ergochromes formation requires further dimerization steps of different xanthone units, probably catalyzed by the cytochrome P450 monooxygenase CPUR_05419. CPUR_05425, CPUR_05426 and CPUR_05431 are unique to Claviceps, thus it is likely that they are involved in further modification of xanthone units or in their dimerization. The yellow ergochromes and the red anthraquinone pigments endocrocin and clavorubin are products from the same PKS derived precursors and the latter are likely shunt products in the pathway of xanthone biosynthesis. It is proposed that atrochrysone carboxylic acid released from the PKS CPUR_05437 can also be converted to endocrocin anthrone which is further oxidized into endocrocin by CPUR_05435. Endocrocin could be then modified to clavorubin, possibly by CPUR_05423 and CPUR_05431. Clavorubin is the principal anthraquinone metabolite produced by the cluster with a much higher yield compared to endocrocin. This Claviceps purpurea (strain 20.1) (Ergot fungus) protein is Monoogygenase CPUR_05431.